Here is a 260-residue protein sequence, read N- to C-terminus: Cobalt transport protein CbiM (260 aa).

A signal peptide spans 1–34 (MKLGESMKKNATLSVKIIAFLGVLIFTVMPVANA). The next 6 helical transmembrane spans lie at 39–59 (EGYL…PFLI), 77–97 (LLFA…LPSF), 109–129 (LSTI…VLLF), 132–152 (LLLA…MAVM), 175–195 (IFFS…IQLG), and 215–235 (VFAI…VLIF).

The protein belongs to the CbiM family. In terms of assembly, forms an energy-coupling factor (ECF) transporter complex composed of an ATP-binding protein (A component, CbiO), a transmembrane protein (T component, CbiQ) and 2 possible substrate-capture proteins (S components, CbiM and CbiN) of unknown stoichimetry.

It localises to the cell membrane. It participates in cofactor biosynthesis; adenosylcobalamin biosynthesis. Part of the energy-coupling factor (ECF) transporter complex CbiMNOQ involved in cobalt import. The protein is Cobalt transport protein CbiM of Clostridium cellulovorans (strain ATCC 35296 / DSM 3052 / OCM 3 / 743B).